Reading from the N-terminus, the 141-residue chain is Lutropin subunit beta (141 aa).

Positions 1-20 (MEMLQGLLLWLLLNVGGVWA) are cleaved as a signal peptide. 6 disulfides stabilise this stretch: cysteine 29–cysteine 77, cysteine 43–cysteine 92, cysteine 46–cysteine 130, cysteine 54–cysteine 108, cysteine 58–cysteine 110, and cysteine 113–cysteine 120. A glycan (N-linked (GlcNAc...) asparagine) is linked at asparagine 33.

Belongs to the glycoprotein hormones subunit beta family. As to quaternary structure, heterodimer of a common alpha chain and a unique beta chain which confers biological specificity to thyrotropin, lutropin, follitropin and gonadotropin.

The protein localises to the secreted. Its function is as follows. Promotes spermatogenesis and ovulation by stimulating the testes and ovaries to synthesize steroids. The chain is Lutropin subunit beta (LHB) from Ailurus fulgens (Himalayan red panda).